We begin with the raw amino-acid sequence, 362 residues long: MAQVFNFSSGPAMLPAEVLKLAQQELCDWHGLGTSVMEISHRGKEFIQVAEEAEQDFRDLLNIPSNYKVLFCHGGGRGQFAGVPLNLLGDKTTADYVDAGYWAASAIKEAKKYCAPQIIDAKITVDGKRAVKPMREWQLSDNAAYLHYCPNETIDGIAIDETPDFGPEVVVTADFSSTILSAPLDVSRYGVIYAGAQKNIGPAGLTLVIVREDLLGKAHESCPSILDYTVLNDNDSMFNTPPTFAWYLSGLVFKWLKAQGGVAAMHKINQQKAELLYGVIDNSDFYRNDVAQANRSRMNVPFQLADNTLDKVFLEESFAAGLHALKGHRVVGGMRASIYNAMPIEGVKALTDFMIDFERRHG.

L-glutamate contacts are provided by Ser-9 and Arg-42. Residues 76–77, Trp-102, Thr-153, Asp-174, and Gln-197 contribute to the pyridoxal 5'-phosphate site; that span reads GR. Lys-198 carries the N6-(pyridoxal phosphate)lysine modification. 239–240 provides a ligand contact to pyridoxal 5'-phosphate; that stretch reads NT.

It belongs to the class-V pyridoxal-phosphate-dependent aminotransferase family. SerC subfamily. In terms of assembly, homodimer. It depends on pyridoxal 5'-phosphate as a cofactor.

It localises to the cytoplasm. The enzyme catalyses O-phospho-L-serine + 2-oxoglutarate = 3-phosphooxypyruvate + L-glutamate. It carries out the reaction 4-(phosphooxy)-L-threonine + 2-oxoglutarate = (R)-3-hydroxy-2-oxo-4-phosphooxybutanoate + L-glutamate. The protein operates within amino-acid biosynthesis; L-serine biosynthesis; L-serine from 3-phospho-D-glycerate: step 2/3. It participates in cofactor biosynthesis; pyridoxine 5'-phosphate biosynthesis; pyridoxine 5'-phosphate from D-erythrose 4-phosphate: step 3/5. In terms of biological role, catalyzes the reversible conversion of 3-phosphohydroxypyruvate to phosphoserine and of 3-hydroxy-2-oxo-4-phosphonooxybutanoate to phosphohydroxythreonine. The polypeptide is Phosphoserine aminotransferase (Salmonella newport (strain SL254)).